Consider the following 470-residue polypeptide: Sperm-associated antigen 8 (470 aa).

The span at 1–21 (METTESTEGSLSRSCDVQPSS) shows a compositional bias: polar residues. Disordered regions lie at residues 1 to 70 (METT…PPAH), 117 to 178 (SGTC…GQGP), and 302 to 321 (LTTQ…DSYQ). Over residues 27-48 (PSEPVPSSSSSPRSTAPAEAPA) the composition is skewed to low complexity. Polar residues predominate over residues 51–60 (SVLTEPSSDS). Composition is skewed to low complexity over residues 122–175 (LGQS…ADPG) and 303–316 (TTQP…STTQ). 2 mn regions span residues 312 to 325 (SSTT…LPRH) and 364 to 378 (ESVT…LVRA).

This sequence belongs to the SPAG8 family. In terms of assembly, microtubule inner protein component of sperm flagellar doublet microtubules. Interacts with FHL5 (via second LIM domain). Interacts with RANBP9. Expressed in testis (at protein level). Not detected in brain, heart, kidney, spleen, liver, lung, thymus and colon (at protein level).

Its subcellular location is the cytoplasm. The protein localises to the nucleus. The protein resides in the cytoplasmic vesicle. It localises to the secretory vesicle. It is found in the acrosome. Its subcellular location is the cytoskeleton. The protein localises to the microtubule organizing center. The protein resides in the spindle. It localises to the cilium axoneme. It is found in the flagellum axoneme. In terms of biological role, microtubule inner protein (MIP) part of the dynein-decorated doublet microtubules (DMTs) in cilia axoneme, which is required for motile cilia beating. Plays a role in spermatogenesis by enhancing the binding of CREM isoform tau to its coactivator FHL5 and increasing the FHL5-regulated transcriptional activation of CREM isoform tau. Involved in the acrosome reaction and in binding of sperm to the zona pellucida. Plays a role in regulation of the cell cycle by controlling progression through the G2/M phase, possibly by delaying the activation of CDK1 which is required for entry into mitosis. May play a role in fertility and microtubule formation through interaction with RANBP9. The protein is Sperm-associated antigen 8 of Mus musculus (Mouse).